The chain runs to 390 residues: Stearoyl-[acyl-carrier-protein] 9-desaturase, chloroplastic (390 aa).

The N-terminal 27 residues, 1–27 (MALKLCFPPHKMPSFPDARIRSHRVFM), are a transit peptide targeting the chloroplast. Fe cation is bound by residues glutamate 132, glutamate 170, histidine 173, glutamate 223, glutamate 256, and histidine 259.

This sequence belongs to the fatty acid desaturase type 2 family. In terms of assembly, homodimer. Requires Fe(2+) as cofactor.

The protein localises to the plastid. The protein resides in the chloroplast. The enzyme catalyses octadecanoyl-[ACP] + 2 reduced [2Fe-2S]-[ferredoxin] + O2 + 2 H(+) = (9Z)-octadecenoyl-[ACP] + 2 oxidized [2Fe-2S]-[ferredoxin] + 2 H2O. It participates in lipid metabolism; fatty acid metabolism. Converts stearoyl-ACP to oleoyl-ACP by introduction of a cis double bond between carbons 9 and 10 of the acyl chain. In Olea europaea (Common olive), this protein is Stearoyl-[acyl-carrier-protein] 9-desaturase, chloroplastic.